The following is a 236-amino-acid chain: tRNA (guanine-N(7)-)-methyltransferase (236 aa).

A disordered region spans residues 1 to 23 (MEADVQRAQQAQLEKGSSVPPWT). Positions 69, 94, 121, and 144 each coordinate S-adenosyl-L-methionine. Asp-144 is an active-site residue. Substrate is bound by residues Lys-148 and Asp-180.

This sequence belongs to the class I-like SAM-binding methyltransferase superfamily. TrmB family.

The catalysed reaction is guanosine(46) in tRNA + S-adenosyl-L-methionine = N(7)-methylguanosine(46) in tRNA + S-adenosyl-L-homocysteine. It functions in the pathway tRNA modification; N(7)-methylguanine-tRNA biosynthesis. Its function is as follows. Catalyzes the formation of N(7)-methylguanine at position 46 (m7G46) in tRNA. This is tRNA (guanine-N(7)-)-methyltransferase from Synechococcus sp. (strain JA-3-3Ab) (Cyanobacteria bacterium Yellowstone A-Prime).